The sequence spans 227 residues: Cytochrome c oxidase subunit 2 (227 aa).

Residues 1-14 (MAYPFQLGLQDATS) are Mitochondrial intermembrane-facing. Residues 15-45 (PIMEELTNFHDHTLMIVFLISSLVLYLISLM) traverse the membrane as a helical segment. The Mitochondrial matrix portion of the chain corresponds to 46 to 59 (LSTKLIHTSTMDAQ). A helical transmembrane segment spans residues 60–87 (EVETIWTILPAIILIMIALPSLRILYMM). The Mitochondrial intermembrane segment spans residues 88–227 (DEINNPALTV…LFENWSISMS (140 aa)). 6 residues coordinate Cu cation: His161, Cys196, Glu198, Cys200, His204, and Met207. A Mg(2+)-binding site is contributed by Glu198.

It belongs to the cytochrome c oxidase subunit 2 family. In terms of assembly, component of the cytochrome c oxidase (complex IV, CIV), a multisubunit enzyme composed of 14 subunits. The complex is composed of a catalytic core of 3 subunits MT-CO1, MT-CO2 and MT-CO3, encoded in the mitochondrial DNA, and 11 supernumerary subunits COX4I, COX5A, COX5B, COX6A, COX6B, COX6C, COX7A, COX7B, COX7C, COX8 and NDUFA4, which are encoded in the nuclear genome. The complex exists as a monomer or a dimer and forms supercomplexes (SCs) in the inner mitochondrial membrane with NADH-ubiquinone oxidoreductase (complex I, CI) and ubiquinol-cytochrome c oxidoreductase (cytochrome b-c1 complex, complex III, CIII), resulting in different assemblies (supercomplex SCI(1)III(2)IV(1) and megacomplex MCI(2)III(2)IV(2)). Found in a complex with TMEM177, COA6, COX18, COX20, SCO1 and SCO2. Interacts with TMEM177 in a COX20-dependent manner. Interacts with COX20. Interacts with COX16. It depends on Cu cation as a cofactor.

Its subcellular location is the mitochondrion inner membrane. The enzyme catalyses 4 Fe(II)-[cytochrome c] + O2 + 8 H(+)(in) = 4 Fe(III)-[cytochrome c] + 2 H2O + 4 H(+)(out). In terms of biological role, component of the cytochrome c oxidase, the last enzyme in the mitochondrial electron transport chain which drives oxidative phosphorylation. The respiratory chain contains 3 multisubunit complexes succinate dehydrogenase (complex II, CII), ubiquinol-cytochrome c oxidoreductase (cytochrome b-c1 complex, complex III, CIII) and cytochrome c oxidase (complex IV, CIV), that cooperate to transfer electrons derived from NADH and succinate to molecular oxygen, creating an electrochemical gradient over the inner membrane that drives transmembrane transport and the ATP synthase. Cytochrome c oxidase is the component of the respiratory chain that catalyzes the reduction of oxygen to water. Electrons originating from reduced cytochrome c in the intermembrane space (IMS) are transferred via the dinuclear copper A center (CU(A)) of subunit 2 and heme A of subunit 1 to the active site in subunit 1, a binuclear center (BNC) formed by heme A3 and copper B (CU(B)). The BNC reduces molecular oxygen to 2 water molecules using 4 electrons from cytochrome c in the IMS and 4 protons from the mitochondrial matrix. This Gerbilliscus robustus (Fringe-tailed gerbil) protein is Cytochrome c oxidase subunit 2 (MT-CO2).